Reading from the N-terminus, the 61-residue chain is MAVPKRKKSKSRRNMHRSHCRLKVPNIGIDKTTGEYKLSHHVCLGGYYNEKQVLEVDSSNV.

It belongs to the bacterial ribosomal protein bL32 family.

The chain is Large ribosomal subunit protein bL32 from Ehrlichia chaffeensis (strain ATCC CRL-10679 / Arkansas).